We begin with the raw amino-acid sequence, 55 residues long: Omega-ctenitoxin-Pr2a (55 aa).

Cystine bridges form between Cys2–Cys16, Cys9–Cys22, Cys15–Cys37, Cys24–Cys35, and Cys45–Cys52.

In terms of tissue distribution, expressed by the venom gland.

The protein resides in the secreted. In terms of biological role, antagonist of L-type calcium channels (Cav1/CACNA1). In vivo, causes paralysis in posterior limbs, and gradual decrease in movement and aggression during 24 hours after intracerebroventricular injection in mice at dose levels of 3 ug per mouse. This Phoneutria reidyi (Brazilian Amazonian armed spider) protein is Omega-ctenitoxin-Pr2a.